Reading from the N-terminus, the 312-residue chain is tRNA-dihydrouridine(16) synthase (312 aa).

FMN is bound by residues Pro-7–Glu-9 and Gln-68. Cys-98 (proton donor) is an active-site residue. Residues Lys-139, Asn-200–Glu-202, and Gly-224–Arg-225 contribute to the FMN site.

The protein belongs to the Dus family. DusC subfamily. It depends on FMN as a cofactor.

It carries out the reaction 5,6-dihydrouridine(16) in tRNA + NADP(+) = uridine(16) in tRNA + NADPH + H(+). It catalyses the reaction 5,6-dihydrouridine(16) in tRNA + NAD(+) = uridine(16) in tRNA + NADH + H(+). Its function is as follows. Catalyzes the synthesis of 5,6-dihydrouridine (D), a modified base found in the D-loop of most tRNAs, via the reduction of the C5-C6 double bond in target uridines. Specifically modifies U16 in tRNAs. The polypeptide is tRNA-dihydrouridine(16) synthase (Salmonella typhimurium (strain LT2 / SGSC1412 / ATCC 700720)).